The primary structure comprises 66 residues: Large ribosomal subunit protein bL35 (66 aa).

It belongs to the bacterial ribosomal protein bL35 family.

The chain is Large ribosomal subunit protein bL35 from Borrelia garinii subsp. bavariensis (strain ATCC BAA-2496 / DSM 23469 / PBi) (Borreliella bavariensis).